The chain runs to 156 residues: MPLDQSFIGREYPPTPAYEVGREKIREFAEAIKDRSPLHRDPEAAKAAGYPDVIAPPTFAVLLSMKAHDAIVEDPQLGLDYSRVVHGQQEFAHHRPIQAGDRLRTVVHVDDIKARAGNDFLTVRAEITTVEGEPVCTAKSTLVARGTAEDPEGEDA.

One can recognise a MaoC-like domain in the interval 8–128 (IGREYPPTPA…DFLTVRAEIT (121 aa)).

This sequence belongs to the UPF0336 family.

In Saccharopolyspora erythraea (strain ATCC 11635 / DSM 40517 / JCM 4748 / NBRC 13426 / NCIMB 8594 / NRRL 2338), this protein is UPF0336 protein SACE_6876.